Reading from the N-terminus, the 143-residue chain is MQEIEIFCDGSSLGNPGPGGYAAILRYKDKEKTISGGEEFTTNNRMELRALNEALKILKRPCRITLYSDSQYVCQAINVWLANWQKKNFSKVKNVDLWKEFLEVSKGHSIVAVWIKGHNGHAENERCDSLAKLEAQKRVKTTT.

The RNase H type-1 domain maps to 1 to 136; sequence MQEIEIFCDG…CDSLAKLEAQ (136 aa). Residues aspartate 9, glutamate 47, aspartate 69, and aspartate 128 each coordinate Mg(2+).

It belongs to the RNase H family. In terms of assembly, monomer. Requires Mg(2+) as cofactor.

The protein localises to the cytoplasm. It carries out the reaction Endonucleolytic cleavage to 5'-phosphomonoester.. In terms of biological role, endonuclease that specifically degrades the RNA of RNA-DNA hybrids. This is Ribonuclease HI (rnhA) from Helicobacter pylori (strain ATCC 700392 / 26695) (Campylobacter pylori).